We begin with the raw amino-acid sequence, 106 residues long: UPF0145 protein MA_3383 (106 aa).

It belongs to the UPF0145 family.

The protein is UPF0145 protein MA_3383 of Methanosarcina acetivorans (strain ATCC 35395 / DSM 2834 / JCM 12185 / C2A).